Here is a 197-residue protein sequence, read N- to C-terminus: Imidazoleglycerol-phosphate dehydratase (197 aa).

The protein belongs to the imidazoleglycerol-phosphate dehydratase family.

The protein resides in the cytoplasm. The enzyme catalyses D-erythro-1-(imidazol-4-yl)glycerol 3-phosphate = 3-(imidazol-4-yl)-2-oxopropyl phosphate + H2O. The protein operates within amino-acid biosynthesis; L-histidine biosynthesis; L-histidine from 5-phospho-alpha-D-ribose 1-diphosphate: step 6/9. In Pseudomonas putida (strain GB-1), this protein is Imidazoleglycerol-phosphate dehydratase.